The sequence spans 203 residues: Holliday junction branch migration complex subunit RuvA (203 aa).

The interval 1-64 is domain I; sequence MIGRLRGIII…EDAQLLYGFN (64 aa). The domain II stretch occupies residues 65–142; it reads NKQERTLFKE…KGLHGDLFTP (78 aa). A flexible linker region spans residues 143–154; sequence AADLVLTSPASP. The tract at residues 155–203 is domain III; sequence ATDDAEQEAVAALVALGYKPQEASRMVSKIARPDTSSETLIREALRAAL.

This sequence belongs to the RuvA family. Homotetramer. Forms an RuvA(8)-RuvB(12)-Holliday junction (HJ) complex. HJ DNA is sandwiched between 2 RuvA tetramers; dsDNA enters through RuvA and exits via RuvB. An RuvB hexamer assembles on each DNA strand where it exits the tetramer. Each RuvB hexamer is contacted by two RuvA subunits (via domain III) on 2 adjacent RuvB subunits; this complex drives branch migration. In the full resolvosome a probable DNA-RuvA(4)-RuvB(12)-RuvC(2) complex forms which resolves the HJ.

The protein resides in the cytoplasm. Functionally, the RuvA-RuvB-RuvC complex processes Holliday junction (HJ) DNA during genetic recombination and DNA repair, while the RuvA-RuvB complex plays an important role in the rescue of blocked DNA replication forks via replication fork reversal (RFR). RuvA specifically binds to HJ cruciform DNA, conferring on it an open structure. The RuvB hexamer acts as an ATP-dependent pump, pulling dsDNA into and through the RuvAB complex. HJ branch migration allows RuvC to scan DNA until it finds its consensus sequence, where it cleaves and resolves the cruciform DNA. The protein is Holliday junction branch migration complex subunit RuvA of Shigella flexneri serotype 5b (strain 8401).